Here is a 166-residue protein sequence, read N- to C-terminus: Seed allergenic protein RAG2 (166 aa).

Residues 1–26 (MASNKVVFSALLLIIVSVLAATATMA) form the signal peptide. Cystine bridges form between Cys-41–Cys-93, Cys-55–Cys-81, Cys-63–Cys-125, Cys-82–Cys-141, and Cys-95–Cys-153. Asn-147 is a glycosylation site (N-linked (GlcNAc...) asparagine).

This sequence belongs to the cereal trypsin/alpha-amylase inhibitor family. Post-translationally, five disulfide bonds are present.

It is found in the secreted. Functionally, seed storage protein. In Oryza sativa subsp. japonica (Rice), this protein is Seed allergenic protein RAG2 (RAG2).